Here is a 418-residue protein sequence, read N- to C-terminus: L-rhamnose isomerase (418 aa).

The Mn(2+) site is built by His262, Asp294, and Asp296.

The protein belongs to the rhamnose isomerase family. Homotetramer. Requires Mn(2+) as cofactor.

Its subcellular location is the cytoplasm. The enzyme catalyses L-rhamnopyranose = L-rhamnulose. The protein operates within carbohydrate degradation; L-rhamnose degradation; glycerone phosphate from L-rhamnose: step 1/3. In terms of biological role, catalyzes the interconversion of L-rhamnose and L-rhamnulose. This Yersinia pseudotuberculosis serotype O:1b (strain IP 31758) protein is L-rhamnose isomerase.